A 434-amino-acid polypeptide reads, in one-letter code: Serine hydroxymethyltransferase (434 aa).

(6S)-5,6,7,8-tetrahydrofolate-binding positions include L132 and 136–138; that span reads GHL. K241 bears the N6-(pyridoxal phosphate)lysine mark.

Belongs to the SHMT family. As to quaternary structure, homodimer. It depends on pyridoxal 5'-phosphate as a cofactor.

The protein resides in the cytoplasm. It carries out the reaction (6R)-5,10-methylene-5,6,7,8-tetrahydrofolate + glycine + H2O = (6S)-5,6,7,8-tetrahydrofolate + L-serine. Its pathway is one-carbon metabolism; tetrahydrofolate interconversion. It participates in amino-acid biosynthesis; glycine biosynthesis; glycine from L-serine: step 1/1. Its function is as follows. Catalyzes the reversible interconversion of serine and glycine with tetrahydrofolate (THF) serving as the one-carbon carrier. This reaction serves as the major source of one-carbon groups required for the biosynthesis of purines, thymidylate, methionine, and other important biomolecules. Also exhibits THF-independent aldolase activity toward beta-hydroxyamino acids, producing glycine and aldehydes, via a retro-aldol mechanism. This chain is Serine hydroxymethyltransferase, found in Nitrobacter hamburgensis (strain DSM 10229 / NCIMB 13809 / X14).